The following is a 185-amino-acid chain: Ribosome-recycling factor (185 aa).

This sequence belongs to the RRF family.

Its subcellular location is the cytoplasm. Functionally, responsible for the release of ribosomes from messenger RNA at the termination of protein biosynthesis. May increase the efficiency of translation by recycling ribosomes from one round of translation to another. This is Ribosome-recycling factor from Vibrio cholerae serotype O1 (strain ATCC 39541 / Classical Ogawa 395 / O395).